Reading from the N-terminus, the 254-residue chain is 5'-nucleotidase SurE (254 aa).

D8, D9, S38, and N91 together coordinate a divalent metal cation.

Belongs to the SurE nucleotidase family. Requires a divalent metal cation as cofactor.

It is found in the cytoplasm. It catalyses the reaction a ribonucleoside 5'-phosphate + H2O = a ribonucleoside + phosphate. Its function is as follows. Nucleotidase that shows phosphatase activity on nucleoside 5'-monophosphates. The protein is 5'-nucleotidase SurE of Anaeromyxobacter dehalogenans (strain 2CP-C).